The sequence spans 282 residues: MVVEVEGFYGVYLLFCTNPKYKGRIYIGFTVNPERRIQQHNGGKHKGGAWKTSGRGPWDMVLIVHGFPNDIAALRFEWAWQHPHVSRRLTHVPRKTKKQSSFDFHLLVLCHMLRVAPWNRLPLTLRWLRQEYRRELPLLLQPPLHMPLAFGQVRARPIPKGEKEKGRLGENRAEETEQEVILLGDAVVQRCRVCYERVQDKDDSLHCFHPGCTLTAHIMCLAKLFLLNEPQNLIPVEGLCPSCGHSLLWGDLIRHRNGCYGDLEEISSSQAHWGDELHRCSD.

The region spanning 7-97 (GFYGVYLLFC…RLTHVPRKTK (91 aa)) is the GIY-YIG domain. Residues 191–243 (CRVCYERVQDKDDSLHCFHPGCTLTAHIMCLAKLFLLNEPQNLIPVEGLCPSC) form an SLX1-type zinc finger.

It belongs to the SLX1 family. Forms a heterodimer with slx4. It depends on a divalent metal cation as a cofactor.

The protein resides in the nucleus. In terms of biological role, catalytic subunit of the slx1-slx4 structure-specific endonuclease that resolves DNA secondary structures generated during DNA repair and recombination. Has endonuclease activity towards branched DNA substrates, introducing single-strand cuts in duplex DNA close to junctions with ss-DNA. In Xenopus laevis (African clawed frog), this protein is Structure-specific endonuclease subunit slx1 (slx1a).